Consider the following 311-residue polypeptide: tRNA dimethylallyltransferase (311 aa).

11-18 serves as a coordination point for ATP; sequence GPTAVGKT. Position 13 to 18 (13 to 18) interacts with substrate; it reads TAVGKT. Positions 36–39 are interaction with substrate tRNA; sequence DSVQ.

It belongs to the IPP transferase family. In terms of assembly, monomer. The cofactor is Mg(2+).

The catalysed reaction is adenosine(37) in tRNA + dimethylallyl diphosphate = N(6)-dimethylallyladenosine(37) in tRNA + diphosphate. Catalyzes the transfer of a dimethylallyl group onto the adenine at position 37 in tRNAs that read codons beginning with uridine, leading to the formation of N6-(dimethylallyl)adenosine (i(6)A). The chain is tRNA dimethylallyltransferase from Exiguobacterium sp. (strain ATCC BAA-1283 / AT1b).